The primary structure comprises 380 residues: Cytochrome b (380 aa).

The next 4 helical transmembrane spans lie at 34–54 (FGSL…LLAM), 78–99 (WLIR…YLHI), 114–134 (WNTG…GYVL), and 179–199 (FFAL…IHLT). 2 residues coordinate heme b: His-84 and His-98. Heme b is bound by residues His-183 and His-197. His-202 provides a ligand contact to a ubiquinone. 4 helical membrane passes run 227 to 247 (LKDI…ALFS), 289 to 309 (LGGV…PFLH), 321 to 341 (LSQL…WVGS), and 348 to 368 (FIII…ILFP).

The protein belongs to the cytochrome b family. As to quaternary structure, the cytochrome bc1 complex contains 11 subunits: 3 respiratory subunits (MT-CYB, CYC1 and UQCRFS1), 2 core proteins (UQCRC1 and UQCRC2) and 6 low-molecular weight proteins (UQCRH/QCR6, UQCRB/QCR7, UQCRQ/QCR8, UQCR10/QCR9, UQCR11/QCR10 and a cleavage product of UQCRFS1). This cytochrome bc1 complex then forms a dimer. Heme b serves as cofactor.

The protein localises to the mitochondrion inner membrane. In terms of biological role, component of the ubiquinol-cytochrome c reductase complex (complex III or cytochrome b-c1 complex) that is part of the mitochondrial respiratory chain. The b-c1 complex mediates electron transfer from ubiquinol to cytochrome c. Contributes to the generation of a proton gradient across the mitochondrial membrane that is then used for ATP synthesis. The sequence is that of Cytochrome b (MT-CYB) from Ardenna tenuirostris (Short-tailed shearwater).